Reading from the N-terminus, the 297-residue chain is Homoserine kinase (297 aa).

ATP is bound at residue 82–92; that stretch reads PLTRGLGSSAS.

Belongs to the GHMP kinase family. Homoserine kinase subfamily.

The protein localises to the cytoplasm. It catalyses the reaction L-homoserine + ATP = O-phospho-L-homoserine + ADP + H(+). Its pathway is amino-acid biosynthesis; L-threonine biosynthesis; L-threonine from L-aspartate: step 4/5. Functionally, catalyzes the ATP-dependent phosphorylation of L-homoserine to L-homoserine phosphate. The chain is Homoserine kinase from Bacillus cereus (strain ATCC 14579 / DSM 31 / CCUG 7414 / JCM 2152 / NBRC 15305 / NCIMB 9373 / NCTC 2599 / NRRL B-3711).